Here is a 103-residue protein sequence, read N- to C-terminus: Small ribosomal subunit protein uS10 (103 aa).

It belongs to the universal ribosomal protein uS10 family. As to quaternary structure, part of the 30S ribosomal subunit.

Its function is as follows. Involved in the binding of tRNA to the ribosomes. The chain is Small ribosomal subunit protein uS10 from Idiomarina loihiensis (strain ATCC BAA-735 / DSM 15497 / L2-TR).